The chain runs to 353 residues: Polyprenal reductase 2 (353 aa).

6 consecutive transmembrane segments (helical) span residues 11–31, 78–98, 175–195, 234–254, 291–308, and 313–335; these read PLLC…ALPI, FMHF…AIWF, MHIV…LSLA, PLLK…WGSL, YLAE…SGAE, and WFLF…NWYL.

It belongs to the steroid 5-alpha reductase family. Polyprenal reductase subfamily.

It localises to the cell membrane. It catalyses the reaction a di-trans,poly-cis-dolichal + NADP(+) = a di-trans,poly-cis-polyprenal + NADPH + H(+). The protein operates within protein modification; protein glycosylation. Functionally, plays a key role in early steps of protein N-linked glycosylation by being involved in the conversion of polyprenol into dolichol. Acts as a polyprenal reductase that mediates the reduction of polyprenal into dolichal in a NADP-dependent mechanism. Dolichols are required for the synthesis of dolichol-linked monosaccharides and the oligosaccharide precursor used for N-glycosylation. The polypeptide is Polyprenal reductase 2 (Oryza sativa subsp. japonica (Rice)).